The primary structure comprises 579 residues: Probable cytochrome c biosynthesis protein (579 aa).

It belongs to the CcmF/CycK/Ccl1/NrfE/CcsA family.

It localises to the mitochondrion. In terms of biological role, could be involved in assembly and maturation of cytochromes c. May play a role in guidance of apocytochromes and heme groups for the covalent linkage introduced by the cytochrome-c-heme lyase. This Daucus carota (Wild carrot) protein is Probable cytochrome c biosynthesis protein.